A 142-amino-acid chain; its full sequence is Universal stress protein C (142 aa).

It belongs to the universal stress protein A family.

The protein localises to the cytoplasm. Its function is as follows. Required for resistance to DNA-damaging agents. The chain is Universal stress protein C (uspC) from Escherichia coli (strain K12).